Consider the following 375-residue polypeptide: FAD-dependent catabolic D-arginine dehydrogenase DauA (375 aa).

FAD is bound by residues A14, 32-33, 41-48, A171, and 331-336; these read ER, STGRSAAH, and GGYGIQ.

Belongs to the FAD-dependent glycerol-3-phosphate dehydrogenase family. As to quaternary structure, monomer. Requires FAD as cofactor.

The enzyme catalyses D-arginine + A + H2O = 5-guanidino-2-oxopentanoate + AH2 + NH4(+). It carries out the reaction a D-alpha-amino acid + A + H2O = a 2-oxocarboxylate + AH2 + NH4(+). Inhibited by D-arginine and D-lysine at high concentration. DauA is highly expressed within the cystic fibrosis (CF) lung, and it is required for virulence via the optimal production of hydrogen cyanide, pyocyanine, pyoverdine, rhamnolipid and alginate during biofilm formation. Involved in the catabolism of D-lysine and D-arginine. Under aerobic conditions, the arginine succinyltransferase (AST) and arginine transaminase (ATA) pathways are 2 major routes for L-arginine utilization as the sole source of carbon and nitrogen. The D-to-L racemization of arginine by DauA and DauB is necessary, before to be channeled into the AST and/or ATA pathways. DauA catalyzes the flavin-dependent oxidative deamination of D-arginine into 2-ketoarginine (2-KA) and ammonia. It also has dehydrogenase activity towards D-lysine, D-tyrosine, D-methionine, D-phenylalanine, D-ornithine, D-histidine and D-leucine as substrates. The protein is FAD-dependent catabolic D-arginine dehydrogenase DauA of Pseudomonas aeruginosa (strain ATCC 15692 / DSM 22644 / CIP 104116 / JCM 14847 / LMG 12228 / 1C / PRS 101 / PAO1).